Consider the following 137-residue polypeptide: Ribosome-binding factor A (137 aa).

This sequence belongs to the RbfA family. Monomer. Binds 30S ribosomal subunits, but not 50S ribosomal subunits or 70S ribosomes.

It localises to the cytoplasm. In terms of biological role, one of several proteins that assist in the late maturation steps of the functional core of the 30S ribosomal subunit. Associates with free 30S ribosomal subunits (but not with 30S subunits that are part of 70S ribosomes or polysomes). Required for efficient processing of 16S rRNA. May interact with the 5'-terminal helix region of 16S rRNA. This is Ribosome-binding factor A from Nitrobacter winogradskyi (strain ATCC 25391 / DSM 10237 / CIP 104748 / NCIMB 11846 / Nb-255).